A 228-amino-acid chain; its full sequence is Probable septum site-determining protein MinC (228 aa).

Belongs to the MinC family. In terms of assembly, interacts with MinD and FtsZ.

Cell division inhibitor that blocks the formation of polar Z ring septums. Rapidly oscillates between the poles of the cell to destabilize FtsZ filaments that have formed before they mature into polar Z rings. Prevents FtsZ polymerization. The polypeptide is Probable septum site-determining protein MinC (Bacillus cereus (strain G9842)).